We begin with the raw amino-acid sequence, 156 residues long: ADP-ribosylation factor-like protein 2-binding protein (156 aa).

The protein belongs to the ARL2BP family.

Its subcellular location is the cytoplasm. It localises to the mitochondrion intermembrane space. The protein localises to the cytoskeleton. The protein resides in the microtubule organizing center. It is found in the centrosome. Its subcellular location is the nucleus. It localises to the spindle. The protein localises to the cilium basal body. Functionally, plays a role as an effector of the ADP-ribosylation factor-like protein 2, ARL2. The polypeptide is ADP-ribosylation factor-like protein 2-binding protein (ARL2BP) (Gallus gallus (Chicken)).